We begin with the raw amino-acid sequence, 969 residues long: Translation initiation factor IF-2 (969 aa).

The disordered stretch occupies residues 96-377 (KRDPAEPVRA…NSRNQHQDRR (282 aa)). Low complexity-rich tracts occupy residues 105-157 (AEPA…QAEP), 167-181 (AAPA…EPAK), and 216-252 (PSAP…PAAP). Over residues 253–264 (DRAREEARRAAE) the composition is skewed to basic and acidic residues. Residues 357–366 (RAGGKGGRGG) show a composition bias toward gly residues. In terms of domain architecture, tr-type G spans 470–637 (PRAPVVTVMG…NVLLQAEILE (168 aa)). A G1 region spans residues 479–486 (GHVDHGKT). 479–486 (GHVDHGKT) contributes to the GTP binding site. Positions 504–508 (GITQH) are G2. Residues 525 to 528 (DTPG) form a G3 region. GTP-binding positions include 525-529 (DTPGH) and 579-582 (NKID). The interval 579–582 (NKID) is G4. Positions 615–617 (SAK) are G5.

It belongs to the TRAFAC class translation factor GTPase superfamily. Classic translation factor GTPase family. IF-2 subfamily.

The protein resides in the cytoplasm. In terms of biological role, one of the essential components for the initiation of protein synthesis. Protects formylmethionyl-tRNA from spontaneous hydrolysis and promotes its binding to the 30S ribosomal subunits. Also involved in the hydrolysis of GTP during the formation of the 70S ribosomal complex. The sequence is that of Translation initiation factor IF-2 from Bordetella parapertussis (strain 12822 / ATCC BAA-587 / NCTC 13253).